Here is a 129-residue protein sequence, read N- to C-terminus: Small ribosomal subunit protein uS11 (129 aa).

Belongs to the universal ribosomal protein uS11 family. Part of the 30S ribosomal subunit. Interacts with proteins S7 and S18. Binds to IF-3.

Its function is as follows. Located on the platform of the 30S subunit, it bridges several disparate RNA helices of the 16S rRNA. Forms part of the Shine-Dalgarno cleft in the 70S ribosome. In Idiomarina loihiensis (strain ATCC BAA-735 / DSM 15497 / L2-TR), this protein is Small ribosomal subunit protein uS11.